Consider the following 1717-residue polypeptide: Protein MON2 homolog (1717 aa).

N-acetylserine is present on Ser2. 2 positions are modified to phosphoserine: Ser205 and Ser537. Residues 511 to 538 (ETECQTTTEEGSSPTQSTEQQDLQSTSD) form a disordered region. Residues 522-538 (SSPTQSTEQQDLQSTSD) show a composition bias toward polar residues.

This sequence belongs to the MON2 family. Homooligomer. Heterotrimer with ATP9A and DOP1B; this interaction is retromer-independent. Interacts with SNX3.

The protein localises to the early endosome membrane. Its function is as follows. Plays a role in regulating membrane trafficking of cargo proteins. Together with ATP9A and DOP1B, regulates SNX3 retromer-mediated endosomal sorting of WLS away from lysosomal degradation. The polypeptide is Protein MON2 homolog (Homo sapiens (Human)).